Reading from the N-terminus, the 121-residue chain is Large ribosomal subunit protein bL17 (121 aa).

It belongs to the bacterial ribosomal protein bL17 family. As to quaternary structure, part of the 50S ribosomal subunit. Contacts protein L32.

In Rubrobacter xylanophilus (strain DSM 9941 / JCM 11954 / NBRC 16129 / PRD-1), this protein is Large ribosomal subunit protein bL17.